Reading from the N-terminus, the 236-residue chain is Leucyl/phenylalanyl-tRNA--protein transferase (236 aa).

The protein belongs to the L/F-transferase family.

The protein localises to the cytoplasm. It catalyses the reaction N-terminal L-lysyl-[protein] + L-leucyl-tRNA(Leu) = N-terminal L-leucyl-L-lysyl-[protein] + tRNA(Leu) + H(+). The enzyme catalyses N-terminal L-arginyl-[protein] + L-leucyl-tRNA(Leu) = N-terminal L-leucyl-L-arginyl-[protein] + tRNA(Leu) + H(+). The catalysed reaction is L-phenylalanyl-tRNA(Phe) + an N-terminal L-alpha-aminoacyl-[protein] = an N-terminal L-phenylalanyl-L-alpha-aminoacyl-[protein] + tRNA(Phe). Functions in the N-end rule pathway of protein degradation where it conjugates Leu, Phe and, less efficiently, Met from aminoacyl-tRNAs to the N-termini of proteins containing an N-terminal arginine or lysine. In Shewanella putrefaciens (strain CN-32 / ATCC BAA-453), this protein is Leucyl/phenylalanyl-tRNA--protein transferase.